Consider the following 243-residue polypeptide: MIREHFEFRQTITTILADDRGHIEAAKSGMLAARREVERQIAGDPYFSATLEPYTPNNPANVPASMARAAAEAGVGPMAAVAGAIARAGVEAMAGAGAAFGLVDNGGDIALVSNREVKIGIYAGASPLSGRFAFLIPPGEEILGICTSSATVGPSISFGTADAVTVFSPDVAAADAWATAICNRITADDTSVLDDLPKTGVLGVLAVIGDAVVRWGDLPPIVRARVDERLITAGSDWQYYGRS.

The protein belongs to the UPF0280 family.

The chain is UPF0280 protein Memar_1519 from Methanoculleus marisnigri (strain ATCC 35101 / DSM 1498 / JR1).